The primary structure comprises 270 residues: Glucosamine-6-phosphate deaminase (270 aa).

Catalysis depends on D72, which acts as the Proton acceptor; for enolization step. Residue D141 is the For ring-opening step of the active site. Residue H143 is the Proton acceptor; for ring-opening step of the active site. E148 (for ring-opening step) is an active-site residue.

The protein belongs to the glucosamine/galactosamine-6-phosphate isomerase family. NagB subfamily. In terms of assembly, homohexamer.

The catalysed reaction is alpha-D-glucosamine 6-phosphate + H2O = beta-D-fructose 6-phosphate + NH4(+). It participates in amino-sugar metabolism; N-acetylneuraminate degradation; D-fructose 6-phosphate from N-acetylneuraminate: step 5/5. Allosterically activated by N-acetylglucosamine 6-phosphate (GlcNAc6P). In terms of biological role, catalyzes the reversible isomerization-deamination of glucosamine 6-phosphate (GlcN6P) to form fructose 6-phosphate (Fru6P) and ammonium ion. The chain is Glucosamine-6-phosphate deaminase from Haemophilus influenzae (strain 86-028NP).